Here is a 345-residue protein sequence, read N- to C-terminus: Biotin synthase (345 aa).

The Radical SAM core domain occupies 66 to 291 (PEVEVEGIIS…RTMLRFAGGR (226 aa)). [4Fe-4S] cluster is bound by residues C81, C85, and C88. [2Fe-2S] cluster is bound by residues C124, C157, C216, and R286.

The protein belongs to the radical SAM superfamily. Biotin synthase family. Homodimer. The cofactor is [4Fe-4S] cluster. Requires [2Fe-2S] cluster as cofactor.

It carries out the reaction (4R,5S)-dethiobiotin + (sulfur carrier)-SH + 2 reduced [2Fe-2S]-[ferredoxin] + 2 S-adenosyl-L-methionine = (sulfur carrier)-H + biotin + 2 5'-deoxyadenosine + 2 L-methionine + 2 oxidized [2Fe-2S]-[ferredoxin]. The protein operates within cofactor biosynthesis; biotin biosynthesis; biotin from 7,8-diaminononanoate: step 2/2. In terms of biological role, catalyzes the conversion of dethiobiotin (DTB) to biotin by the insertion of a sulfur atom into dethiobiotin via a radical-based mechanism. This Mycobacterium avium (strain 104) protein is Biotin synthase.